The sequence spans 186 residues: Threonylcarbamoyl-AMP synthase (186 aa).

The YrdC-like domain maps to 1–186 (MADTWEAAHS…LNNQVFRDDA (186 aa)).

This sequence belongs to the SUA5 family. TsaC subfamily.

The protein resides in the cytoplasm. It catalyses the reaction L-threonine + hydrogencarbonate + ATP = L-threonylcarbamoyladenylate + diphosphate + H2O. Its function is as follows. Required for the formation of a threonylcarbamoyl group on adenosine at position 37 (t(6)A37) in tRNAs that read codons beginning with adenine. Catalyzes the conversion of L-threonine, HCO(3)(-)/CO(2) and ATP to give threonylcarbamoyl-AMP (TC-AMP) as the acyladenylate intermediate, with the release of diphosphate. The chain is Threonylcarbamoyl-AMP synthase from Idiomarina loihiensis (strain ATCC BAA-735 / DSM 15497 / L2-TR).